Here is a 256-residue protein sequence, read N- to C-terminus: GTP cyclohydrolase FolE2 (256 aa).

This sequence belongs to the GTP cyclohydrolase IV family.

It catalyses the reaction GTP + H2O = 7,8-dihydroneopterin 3'-triphosphate + formate + H(+). It participates in cofactor biosynthesis; 7,8-dihydroneopterin triphosphate biosynthesis; 7,8-dihydroneopterin triphosphate from GTP: step 1/1. In terms of biological role, converts GTP to 7,8-dihydroneopterin triphosphate. The sequence is that of GTP cyclohydrolase FolE2 from Maridesulfovibrio salexigens (strain ATCC 14822 / DSM 2638 / NCIMB 8403 / VKM B-1763) (Desulfovibrio salexigens).